Here is a 74-residue protein sequence, read N- to C-terminus: Conotoxin Vc6.11 (74 aa).

An N-terminal signal peptide occupies residues 1 to 19 (MEKLTILLLVAAVLMSTQA). A propeptide spanning residues 20-41 (LIQEQRQKAKINLFSKRKPSAE) is cleaved from the precursor. Cystine bridges form between C55/C66 and C61/C71.

This sequence belongs to the conotoxin O2 superfamily. As to expression, expressed by the venom duct.

The protein resides in the secreted. In terms of biological role, inhibits voltage-gated ion channels. The chain is Conotoxin Vc6.11 from Conus victoriae (Queen Victoria cone).